The primary structure comprises 251 residues: Regulator of G-protein signaling 9-binding protein C (251 aa).

Over 1 to 230 (MPLQNVKVAD…NSKGCCSDGQ (230 aa)) the chain is Cytoplasmic. 2 coiled-coil regions span residues 53 to 94 (LRDE…ELER) and 158 to 187 (ANKASLEYQEIEEEILKVDNMITDMEMKVN). The helical; Anchor for type IV membrane protein transmembrane segment at 231-250 (LIVSLLLCGTALVAITLYSI) threads the bilayer. Position 251 (leucine 251) is a topological domain, extracellular.

The protein belongs to the RGS7BP/RGS9BP family.

It is found in the membrane. In terms of biological role, regulator of G protein-coupled receptor (GPCR) signaling. Probably acts by regulating the activity of some 'R7' family protein (RGS6, RGS7, RGS9 and/or RGS11). This is Regulator of G-protein signaling 9-binding protein C (rgs9bp-c) from Xenopus laevis (African clawed frog).